The primary structure comprises 102 residues: Small ribosomal subunit protein uS10 (102 aa).

This sequence belongs to the universal ribosomal protein uS10 family. In terms of assembly, part of the 30S ribosomal subunit.

In terms of biological role, involved in the binding of tRNA to the ribosomes. The sequence is that of Small ribosomal subunit protein uS10 from Streptococcus thermophilus (strain ATCC BAA-491 / LMD-9).